Reading from the N-terminus, the 524-residue chain is Protein hunchback (524 aa).

2 disordered regions span residues 42–86 and 101–187; these read IVKR…PQTQ and YNHN…DEQS. Residues 59–75 are compositionally biased toward low complexity; the sequence is SGSDFHSSSPSSDTSQD. Residues 76–86 are compositionally biased toward polar residues; the sequence is LQHSYQSPQTQ. 3 stretches are compositionally biased toward basic and acidic residues: residues 118–127, 138–154, and 164–178; these read KSEKEEKDME, RKPD…EMSL, and TSEH…KSDN. 4 consecutive C2H2-type zinc fingers follow at residues 202 to 224, 231 to 253, 259 to 281, and 298 to 311; these read FKCK…SKVH, LTCP…LRNH, FQCN…MKSH, and YCHS…RYGH. A disordered region spans residues 402–442; it reads DLSKPGCSYTGEQKSRRKGPAFKVDPTQVESEEEDEETSTT. 2 consecutive C2H2-type zinc fingers follow at residues 471 to 493 and 499 to 523; these read NSCQ…MGYH and FTCN…RVSH.

This sequence belongs to the hunchback C2H2-type zinc-finger protein family.

Its subcellular location is the nucleus. Functionally, gap class segmentation protein that controls development of head structures. In Tribolium castaneum (Red flour beetle), this protein is Protein hunchback (hb).